We begin with the raw amino-acid sequence, 332 residues long: Melanocortin receptor 4 (332 aa).

Topologically, residues 1 to 43 (MNSTQPLGMHTSLHSWNRSAHGMPTNVSESLAKGYSDGGCYEQ) are extracellular. N2, N17, and N26 each carry an N-linked (GlcNAc...) asparagine glycan. Intrachain disulfides connect C40-C279 and C271-C277. A helical membrane pass occupies residues 44-69 (LFVSPEVFVTLGVISLLENILVIVAI). Topologically, residues 70–81 (AKNKNLHSPMYF) are cytoplasmic. A helical membrane pass occupies residues 82–106 (FICSLAVADMLVSVSNGSETIVITL). Residues E100, D122, and D126 each coordinate Ca(2+). Topologically, residues 107–123 (LNSTDTDAQSFTVDIDN) are extracellular. A helical transmembrane segment spans residues 124–145 (VIDSVICSSLLASICSLLSIAV). Over 146 to 165 (DRYFTIFYALQYHNIMTVKR) the chain is Cytoplasmic. The helical transmembrane segment at 166-186 (VAITISAIWAACTVSGVLFII) threads the bilayer. The Extracellular segment spans residues 187–191 (YSDSS). The chain crosses the membrane as a helical span at residues 192–215 (AVIICLITVFFTMLALMASLYVHM). The Cytoplasmic portion of the chain corresponds to 216-248 (FLMARLHIKRIAVLPGSGTIRQGANMKGAITLT). A helical membrane pass occupies residues 249-271 (ILIGVFVVCWAPFFLHLIFYISC). The Extracellular portion of the chain corresponds to 272–280 (PQNPYCVCF). A helical membrane pass occupies residues 281–304 (MSHFNLYLILIMCNSIIDPLIYAL). At 305–332 (RSQELRKTFKEIICCSPLGGLCDLSSRY) the chain is on the cytoplasmic side. C318 carries S-palmitoyl cysteine lipidation.

The protein belongs to the G-protein coupled receptor 1 family. In terms of assembly, homodimer; disulfide-linked, also forms higher order oligomers. Interacts with GNAS. Interacts with ATRNL1. Interacts with MGRN1; this interaction competes with GNAS-binding and thus inhibits agonist-induced cAMP production. Interacts with MRAP and MRAP2; these associated factors increase ligand-sensitivity and generation of cAMP.

The protein resides in the cell membrane. Its function is as follows. Hormone receptor that acts as a key component of the leptin-melanocortin pathway at the intersection of homeostatic maintenance of energetic state. Plays a role in regulating food intake: activation by a stimulating hormone such as anorexigenic alpha-melanocyte stimulating hormone (alpha-MSH) inhibits appetite, whereas binding to a natural antagonist like Agouti-related protein/AGRP promotes appetite. G-protein-coupled receptor that activates conventional Galphas signaling leading to induction of anorexogenic signaling in the hypothalamus to result in negative energy balance. Regulates the firing activity of neurons from the hypothalamus by alpha-MSH and AGRP independently of Galphas signaling by ligand-induced coupling of closure of inwardly rectifying potassium channel KCNJ13. In intestinal epithelial cells, plays a role in the inhibition of hepatic glucose production via nesfatin-1/NUCB2 leading to increased cyclic adenosine monophosphate (cAMP) levels and glucagon-like peptide 1 (GLP-1) secretion in the intestinal epithelium. This is Melanocortin receptor 4 (MC4R) from Bos taurus (Bovine).